Here is a 940-residue protein sequence, read N- to C-terminus: Leucine--tRNA ligase, mitochondrial (940 aa).

The 'HIGH' region motif lies at 54 to 64; it reads PYPSGALHMGH. The short motif at 638–642 is the 'KMSKS' region element; the sequence is TINKL. ATP is bound at residue Lys641. The tract at residues 724–744 is disordered; it reads KEQHQHQQQQHQQPLPSSEFN.

The protein belongs to the class-I aminoacyl-tRNA synthetase family.

It localises to the mitochondrion. It catalyses the reaction tRNA(Leu) + L-leucine + ATP = L-leucyl-tRNA(Leu) + AMP + diphosphate. In Dictyostelium discoideum (Social amoeba), this protein is Leucine--tRNA ligase, mitochondrial (mleuS).